Here is a 552-residue protein sequence, read N- to C-terminus: Glutamine--tRNA ligase (552 aa).

A 'HIGH' region motif is present at residues 34 to 44 (PEPNGYLHIGH). Residues 35-37 (EPN) and 41-47 (HIGHAKS) contribute to the ATP site. The L-glutamine site is built by aspartate 67 and tyrosine 212. ATP is bound by residues threonine 231, 261–262 (RL), and 269–271 (MSK). The 'KMSKS' region motif lies at 268-272 (VMSKR).

This sequence belongs to the class-I aminoacyl-tRNA synthetase family. As to quaternary structure, monomer.

The protein localises to the cytoplasm. It carries out the reaction tRNA(Gln) + L-glutamine + ATP = L-glutaminyl-tRNA(Gln) + AMP + diphosphate. The protein is Glutamine--tRNA ligase of Aliivibrio fischeri (strain MJ11) (Vibrio fischeri).